The chain runs to 300 residues: MTDSNPTRCGYVAIVGRPNVGKSTLLNHILGQKLAITSRKPQTTRHNMLGIKTEGDVQAIYVDTPGMHKANDKALNRYMNRNASAALKDVDVVIFVVDRTKWTDEDQLVLERVQYVTGPLIIAVNKTDRMEEKAELIPHLQWLQEQLPNAEVMPISAQQGHNLEALEAQIAKHLPENDHFFPEDQITDRSSRFLAAELVREKIMRQLGAELPYQITVEIEEFKQQGHVLHIHALILVERDGQKKIIIGDKGERIKRIGSEARKDMEVLFDSKVMLNLWVKVKGGWSDDERALRSLGYGDL.

The 169-residue stretch at 8–176 folds into the Era-type G domain; that stretch reads RCGYVAIVGR…EAQIAKHLPE (169 aa). Residues 16–23 form a G1 region; it reads GRPNVGKS. 16 to 23 serves as a coordination point for GTP; that stretch reads GRPNVGKS. Residues 42-46 are G2; the sequence is QTTRH. The tract at residues 63–66 is G3; the sequence is DTPG. GTP contacts are provided by residues 63–67 and 125–128; these read DTPGM and NKTD. Positions 125–128 are G4; the sequence is NKTD. Positions 155–157 are G5; it reads ISA. In terms of domain architecture, KH type-2 spans 199–283; sequence VREKIMRQLG…MLNLWVKVKG (85 aa).

The protein belongs to the TRAFAC class TrmE-Era-EngA-EngB-Septin-like GTPase superfamily. Era GTPase family. As to quaternary structure, monomer.

It localises to the cytoplasm. It is found in the cell inner membrane. In terms of biological role, an essential GTPase that binds both GDP and GTP, with rapid nucleotide exchange. Plays a role in 16S rRNA processing and 30S ribosomal subunit biogenesis and possibly also in cell cycle regulation and energy metabolism. The protein is GTPase Era of Pseudomonas putida (strain ATCC 700007 / DSM 6899 / JCM 31910 / BCRC 17059 / LMG 24140 / F1).